A 197-amino-acid polypeptide reads, in one-letter code: Holliday junction branch migration complex subunit RuvA (197 aa).

Residues 1-63 (MFEYLNGKLV…EDAHSLYGFV (63 aa)) are domain I. The segment at 64 to 142 (NEAEKALFLR…ATGTVGISLL (79 aa)) is domain II. The interval 142 to 146 (LDAGP) is flexible linker. The domain III stretch occupies residues 147-197 (AGNLALEEAIEALQALGYKATELKKIEKKLAQETGLTSEEYIKSALKLMMK).

The protein belongs to the RuvA family. Homotetramer. Forms an RuvA(8)-RuvB(12)-Holliday junction (HJ) complex. HJ DNA is sandwiched between 2 RuvA tetramers; dsDNA enters through RuvA and exits via RuvB. An RuvB hexamer assembles on each DNA strand where it exits the tetramer. Each RuvB hexamer is contacted by two RuvA subunits (via domain III) on 2 adjacent RuvB subunits; this complex drives branch migration. In the full resolvosome a probable DNA-RuvA(4)-RuvB(12)-RuvC(2) complex forms which resolves the HJ.

The protein localises to the cytoplasm. Its function is as follows. The RuvA-RuvB-RuvC complex processes Holliday junction (HJ) DNA during genetic recombination and DNA repair, while the RuvA-RuvB complex plays an important role in the rescue of blocked DNA replication forks via replication fork reversal (RFR). RuvA specifically binds to HJ cruciform DNA, conferring on it an open structure. The RuvB hexamer acts as an ATP-dependent pump, pulling dsDNA into and through the RuvAB complex. HJ branch migration allows RuvC to scan DNA until it finds its consensus sequence, where it cleaves and resolves the cruciform DNA. This is Holliday junction branch migration complex subunit RuvA from Lactococcus lactis subsp. lactis (strain IL1403) (Streptococcus lactis).